We begin with the raw amino-acid sequence, 350 residues long: Cyclin-O (350 aa).

The segment at 1–89 is disordered; the sequence is MVTPCPTSPS…GSPLPGPAQP (89 aa). The segment covering 28–42 has biased composition (basic residues); that stretch reads PVKKSRRPRLRRKQP. Phosphoserine is present on Ser81.

The protein belongs to the cyclin family. Present in respiratory cells (at protein level).

The protein localises to the cytoplasm. It is found in the nucleus. Its subcellular location is the nucleolus. Specifically required for generation of multiciliated cells, possibly by promoting a cell cycle state compatible with centriole amplification and maturation. Acts downstream of MCIDAS to promote mother centriole amplification and maturation in preparation for apical docking. This chain is Cyclin-O, found in Homo sapiens (Human).